The chain runs to 211 residues: MHLFHLCLIILCSCPTVQASKLCLGWLLGMDIDPYKEFGATVELLSFLPADFFPSVRDLLDTASALYREALESSDHCSPHHTALRQTVLCWGELMSLASWVGTNLEDPAARELVVSYVNDNMGLKVRQLLWFHISCLTFGRETVLEYLVSFWVWIRTPPAYRPPNAPILSTLPETTVVRRRRPSGRRTPSPRRRRSQSPRRRRSQSPASSC.

The N-terminal stretch at Met1 to Ala19 is a signal peptide. Positions Gly25–Leu27 are HBEAG. The tract at residues Asn165–Cys211 is disordered. Over residues Val178–Ser204 the composition is skewed to basic residues. One copy of the 1; half-length repeat lies at Pro183–Pro189. The interval Pro183 to Gln205 is 3 X 8 AA repeats of S-P-R-R-R-R-S-Q. Residues Pro183–Cys211 constitute a propeptide that is removed on maturation. Tandem repeats lie at residues Ser190 to Gln197 and Ser198 to Gln205.

This sequence belongs to the orthohepadnavirus precore antigen family. In terms of assembly, homodimerizes. Post-translationally, phosphorylated. Cleaved by host furin.

The protein resides in the secreted. Its subcellular location is the host nucleus. May regulate immune response to the intracellular capsid in acting as a T-cell tolerogen, by having an immunoregulatory effect which prevents destruction of infected cells by cytotoxic T-cells. This immune regulation may predispose to chronicity during perinatal infections and prevent severe liver injury during adult infections. The chain is External core antigen from Woolly monkey hepatitis B virus (isolate Louisville) (WMHBV).